A 137-amino-acid chain; its full sequence is Transcription antitermination protein NusB (137 aa).

It belongs to the NusB family.

Functionally, involved in transcription antitermination. Required for transcription of ribosomal RNA (rRNA) genes. Binds specifically to the boxA antiterminator sequence of the ribosomal RNA (rrn) operons. This is Transcription antitermination protein NusB from Clavibacter michiganensis subsp. michiganensis (strain NCPPB 382).